Consider the following 2273-residue polypeptide: Nonribosomal peptide synthetase hasD (2273 aa).

The segment at 100–446 is adenylation 1; sequence FHDQLQKHSS…AGLGLALGYF (347 aa). A Carrier 1 domain is found at 588-664; that stretch reads ERGLGAVESV…NIAAAVVELS (77 aa). Ser-625 is modified (O-(pantetheine 4'-phosphoryl)serine). Residues 696–1120 form a condensation 1 region; sequence IAPMTDMQTR…AAQPDTDLSN (425 aa). Positions 1156–1487 are adenylation 2; that stretch reads ENSIQAHPDI…SGVQVTPGYL (332 aa). A Carrier 2 domain is found at 1634–1714; it reads DLETDTQRVL…DLSLAIDELV (81 aa). At Ser-1673 the chain carries O-(pantetheine 4'-phosphoryl)serine. Residues 1735-2127 form a condensation 2 region; that stretch reads GQLPLSYLEK…QDLEVDMEYD (393 aa). The interval 2174 to 2200 is disordered; the sequence is PVGLTPSHEGSAELTNGTNKTDSTTGQ. Positions 2186–2200 are enriched in polar residues; the sequence is ELTNGTNKTDSTTGQ. In terms of domain architecture, Carrier 3 spans 2201 to 2273; it reads QELENNLTDV…LELATCAVII (73 aa). Ser-2235 is subject to O-(pantetheine 4'-phosphoryl)serine.

Belongs to the NRP synthetase family. Pantetheine 4'-phosphate serves as cofactor.

It participates in secondary metabolite biosynthesis. Its function is as follows. Nonribosomal peptide synthetase; part of the gene cluster that mediates the biosynthesis of hexadehydro-astechrome (HAS), a tryptophan-derived iron(III)-complex that acts as a virulence factor in infected mice. Within the pathway, the NRPS condenses tryptophan and alanine to produce the Trp-Ala dipeptide. The 7-dimethylallyltryptophan synthase hasE then catalyzes the prenylation of the hasD-tethered tryptophan or the resulting tethered Trp-Ala dipeptide at the C-7 position of the indole moiety. HAS biosynthesis continues via tethered intermediates with the succesive actions of the cytochrome P450 monooxygenase hasH, the O-methyltransferase hasC, and the FAD-linked oxidoreductase hasG. The resulting O-methylated diketopiperazine is then released from hasD. Finally, three O-methylated diketopiperazine molecules assemble in a trimeric complex with Fe(III) to produce hexadehydro-astechrome. In Aspergillus fumigatus (strain CBS 144.89 / FGSC A1163 / CEA10) (Neosartorya fumigata), this protein is Nonribosomal peptide synthetase hasD.